A 621-amino-acid chain; its full sequence is SH2B adapter protein 2 (621 aa).

Position 47 is a phosphotyrosine (tyrosine 47). The residue at position 130 (serine 130) is a Phosphoserine. The tract at residues 144–165 is disordered; sequence RASPEPEGGATPKTTEPVSEPR. The PH domain occupies 186–299; it reads DIQREGALRF…WVADIQGCVD (114 aa). A Phosphoserine modification is found at serine 303. The SH2 domain maps to 409–507; that stretch reads WFHGTLSRVK…SADITLRSYV (99 aa). Disordered regions lie at residues 507–528 and 548–609; these read VRAQ…PVPA and PPTS…ATLG. A compositionally biased stretch (low complexity) spans 552-570; the sequence is PSNGAGASSSSGSSSSATS. Serine 597 bears the Phosphoserine mark. Tyrosine 618 is modified (phosphotyrosine).

This sequence belongs to the SH2B adapter family. As to quaternary structure, homodimer. Interacts with KIT/c-KIT, SHC1, EPOR, PDGFR, VAV1 and VAV3. Interacts (via N-terminal region) with SHC1. Interacts (via the phosphorylated C-terminus) with GRB2. Interacts (via its SH2 domain) with EPOR, INSR and KIT. Interacts with GRB2 after B-cell antigen receptor stimulation. Interacts (via PH domain) with VAV3. Interacts with NTRK1, NTRK2 and NTRK3 (phosphorylated); after stimulation of the receptor by its extracellular ligand and subsequent autophosphorylation of the receptor. Binds INSR, GRB2, ASB6 and CAP. Insulin stimulation leads to dissociation of CAP. Binds CBS only when SH2B2/APS has become phosphorylated. INSR binding does not depend on the phosphorylation of SH2B2/APS. In terms of processing, phosphorylated on a tyrosine residue by NTRK1, NTRK2, NTRK3 and INSR after stimulation of the receptor by its extracellular ligand. Tyrosine phosphorylated by JAK2, KIT and other kinases activated by B-cell receptor in response to stimulation with cytokines, IL3, IL5, PDGF, IGF1, IGF2, CSF2/GM-CSF and cross-linking of the B-cell receptor complex. As to expression, detected in embryonic brain, spinal cord and cortical neurons.

The protein resides in the cytoplasm. It localises to the membrane. Adapter protein for several members of the tyrosine kinase receptor family. Involved in multiple signaling pathways. Binds to EPOR and suppresses EPO-induced STAT5 activation, possibly through a masking effect on STAT5 docking sites in EPOR. Suppresses PDGF-induced mitogenesis. Involved in stimulation of glucose uptake by insulin. Involved in coupling from immunoreceptor to Ras signaling. Acts as a negative regulator of cytokine signaling in collaboration with CBL. Induces cytoskeletal reorganization and neurite outgrowth in cultured neurons. This is SH2B adapter protein 2 (Sh2b2) from Rattus norvegicus (Rat).